The chain runs to 395 residues: Carbamoyl phosphate synthase small chain (395 aa).

The interval 1–192 is CPSase; sequence MTYNLHPAIL…LQYKTDKMYG (192 aa). L-glutamine is bound by residues serine 50, glycine 244, and glycine 246. Residues 196–383 enclose the Glutamine amidotransferase type-1 domain; it reads KIILIDFGVK…INLIKHFKQY (188 aa). Cysteine 273 acts as the Nucleophile in catalysis. L-glutamine is bound by residues methionine 274, glutamine 277, asparagine 313, glycine 315, and phenylalanine 316. Active-site residues include histidine 356 and glutamate 358.

This sequence belongs to the CarA family. As to quaternary structure, composed of two chains; the small (or glutamine) chain promotes the hydrolysis of glutamine to ammonia, which is used by the large (or ammonia) chain to synthesize carbamoyl phosphate. Tetramer of heterodimers (alpha,beta)4.

It localises to the plastid. It is found in the chloroplast. It catalyses the reaction hydrogencarbonate + L-glutamine + 2 ATP + H2O = carbamoyl phosphate + L-glutamate + 2 ADP + phosphate + 2 H(+). The enzyme catalyses L-glutamine + H2O = L-glutamate + NH4(+). It participates in amino-acid biosynthesis; L-arginine biosynthesis; carbamoyl phosphate from bicarbonate: step 1/1. It functions in the pathway pyrimidine metabolism; UMP biosynthesis via de novo pathway; (S)-dihydroorotate from bicarbonate: step 1/3. In terms of biological role, small subunit of the glutamine-dependent carbamoyl phosphate synthetase (CPSase). CPSase catalyzes the formation of carbamoyl phosphate from the ammonia moiety of glutamine, carbonate, and phosphate donated by ATP, constituting the first step of 2 biosynthetic pathways, one leading to arginine and/or urea and the other to pyrimidine nucleotides. The small subunit (glutamine amidotransferase) binds and cleaves glutamine to supply the large subunit with the substrate ammonia. The polypeptide is Carbamoyl phosphate synthase small chain (Gracilaria tenuistipitata var. liui (Red alga)).